The primary structure comprises 153 residues: Cytochrome c-554 (153 aa).

The signal sequence occupies residues 1 to 20; the sequence is MRPIPALALTFSLVAMPALA. Q21 carries the pyrrolidone carboxylic acid modification. Heme c-binding residues include M37, C142, C145, and H146.

In terms of processing, binds 1 heme c group covalently per subunit.

Its subcellular location is the periplasm. Its function is as follows. Monoheme c-type cytochrome, that is particularly expressed when cells generate energy via aerobic respiration. This chain is Cytochrome c-554 (cycF), found in Cereibacter sphaeroides (strain ATCC 17023 / DSM 158 / JCM 6121 / CCUG 31486 / LMG 2827 / NBRC 12203 / NCIMB 8253 / ATH 2.4.1.) (Rhodobacter sphaeroides).